The sequence spans 405 residues: Argininosuccinate synthase (405 aa).

ATP contacts are provided by residues 13–21 (AYSGGLDTS) and alanine 40. The L-citrulline site is built by tyrosine 91 and serine 96. Glycine 121 contacts ATP. Residues threonine 123, asparagine 127, and aspartate 128 each coordinate L-aspartate. An L-citrulline-binding site is contributed by asparagine 127. 5 residues coordinate L-citrulline: arginine 131, serine 182, serine 191, glutamate 267, and tyrosine 279.

This sequence belongs to the argininosuccinate synthase family. Type 1 subfamily. As to quaternary structure, homotetramer.

It localises to the cytoplasm. It catalyses the reaction L-citrulline + L-aspartate + ATP = 2-(N(omega)-L-arginino)succinate + AMP + diphosphate + H(+). It participates in amino-acid biosynthesis; L-arginine biosynthesis; L-arginine from L-ornithine and carbamoyl phosphate: step 2/3. This is Argininosuccinate synthase from Rhizobium meliloti (strain 1021) (Ensifer meliloti).